Reading from the N-terminus, the 330-residue chain is MDRVLPFRFAEEEGVFWLLDQRRLPQEEVYVPVRTAREMAQAIRDMVVRGAPAIGVSAAFGMVLAHLAGEDLEEADRRLRASRPTAVNLFHALDRMRPFWGDLAGSLLEARRIWREVEETEAAISRHGAQILWGQVLTHCNTGPLATGGYGTALGAIVEAYRLGRVRHVWVDETRPYLQGARLTAYELQKAGVPATLITDSMAGWLMARGAVDAVVVGVDRMALNGDFANKVGTYALAVLAHHHGIPFYAALPLSSVDPRLASGEGIPIEERSPEEVVAFRGVRIAPEGFPAYHPAFDVTPHRYLTGIITEKGVLYPPFAEGLRRALGLD.

Residues 49 to 51, Arg83, and Gln179 each bind substrate; that span reads RGA. Asp220 functions as the Proton donor in the catalytic mechanism. 230-231 lines the substrate pocket; that stretch reads NK.

This sequence belongs to the eIF-2B alpha/beta/delta subunits family. MtnA subfamily.

The catalysed reaction is 5-(methylsulfanyl)-alpha-D-ribose 1-phosphate = 5-(methylsulfanyl)-D-ribulose 1-phosphate. It functions in the pathway amino-acid biosynthesis; L-methionine biosynthesis via salvage pathway; L-methionine from S-methyl-5-thio-alpha-D-ribose 1-phosphate: step 1/6. In terms of biological role, catalyzes the interconversion of methylthioribose-1-phosphate (MTR-1-P) into methylthioribulose-1-phosphate (MTRu-1-P). This chain is Methylthioribose-1-phosphate isomerase, found in Thermus thermophilus (strain ATCC BAA-163 / DSM 7039 / HB27).